The sequence spans 174 residues: Large ribosomal subunit protein uL13 (174 aa).

Disordered stretches follow at residues Met1 to Pro22 and Gly153 to Lys174.

Belongs to the universal ribosomal protein uL13 family. Part of the 50S ribosomal subunit. Contacts proteins L3 and L20.

Its function is as follows. This protein is one of the early assembly proteins of the 50S ribosomal subunit. Binds to the 23S rRNA. The polypeptide is Large ribosomal subunit protein uL13 (rplM) (Deinococcus radiodurans (strain ATCC 13939 / DSM 20539 / JCM 16871 / CCUG 27074 / LMG 4051 / NBRC 15346 / NCIMB 9279 / VKM B-1422 / R1)).